A 188-amino-acid chain; its full sequence is Probable chorismate pyruvate-lyase (188 aa).

3 residues coordinate substrate: Arg-77, Leu-115, and Glu-174.

The protein belongs to the UbiC family.

The protein resides in the cytoplasm. It catalyses the reaction chorismate = 4-hydroxybenzoate + pyruvate. It participates in cofactor biosynthesis; ubiquinone biosynthesis. In terms of biological role, removes the pyruvyl group from chorismate, with concomitant aromatization of the ring, to provide 4-hydroxybenzoate (4HB) for the ubiquinone pathway. This chain is Probable chorismate pyruvate-lyase, found in Shewanella loihica (strain ATCC BAA-1088 / PV-4).